We begin with the raw amino-acid sequence, 288 residues long: 11-beta-hydroxysteroid dehydrogenase 1 (288 aa).

Residues Met-1–Tyr-4 lie on the Cytoplasmic side of the membrane. The helical; Signal-anchor for type II membrane protein transmembrane segment at Leu-5–Asn-20 threads the bilayer. The Lumenal segment spans residues Glu-21–Asn-288. NADP(+) is bound by residues Gly-37 to Ser-63, Thr-88 to Met-89, and Asn-115 to Ile-117. A glycan (N-linked (GlcNAc...) asparagine) is linked at Asn-158. Ser-166 lines the substrate pocket. The active-site Proton acceptor is Tyr-179. Tyr-179 to Lys-183 is a binding site for NADP(+). An N-linked (GlcNAc...) asparagine glycan is attached at Asn-203. NADP(+) contacts are provided by residues Gly-212–Thr-218 and Ile-214–Thr-218.

The protein belongs to the short-chain dehydrogenases/reductases (SDR) family. Homodimer. Post-translationally, glycosylated. In terms of tissue distribution, liver, kidney, lung and testis. Brain. Expressed in liver (at protein level).

The protein resides in the endoplasmic reticulum membrane. The catalysed reaction is an 11beta-hydroxysteroid + NADP(+) = an 11-oxosteroid + NADPH + H(+). It catalyses the reaction corticosterone + NADP(+) = 11-dehydrocorticosterone + NADPH + H(+). The enzyme catalyses a 7beta-hydroxysteroid + NADP(+) = a 7-oxosteroid + NADPH + H(+). It carries out the reaction 7-oxocholesterol + NADPH + H(+) = 7beta-hydroxycholesterol + NADP(+). The catalysed reaction is chenodeoxycholate + NADP(+) = 7-oxolithocholate + NADPH + H(+). It catalyses the reaction 7-oxolithocholate + NADPH + H(+) = ursodeoxycholate + NADP(+). The enzyme catalyses glycochenodeoxycholate + NADP(+) = 7-oxoglycolithocholate + NADPH + H(+). It carries out the reaction taurochenodeoxycholate + NADP(+) = 7-oxotaurolithocholate + NADPH + H(+). The catalysed reaction is tauroursodeoxycholate + NADP(+) = 7-oxotaurolithocholate + NADPH + H(+). It catalyses the reaction glycoursodeoxycholate + NADP(+) = 7-oxoglycolithocholate + NADPH + H(+). The enzyme catalyses 7-oxopregnenolone + NADPH + H(+) = 7beta-hydroxypregnenolone + NADP(+). It carries out the reaction 3beta,7alpha-dihydroxyandrost-5-en-17-one + NADP(+) = 3beta-hydroxy-5-androstene-7,17-dione + NADPH + H(+). The catalysed reaction is 3beta-hydroxy-5-androstene-7,17-dione + NADPH + H(+) = 3beta,7beta-dihydroxyandrost-5-en-17-one + NADP(+). It catalyses the reaction 3beta-hydroxy-5alpha-androstane-7,17-dione + NADPH + H(+) = 3beta,7beta-dihydroxy-5alpha-androstan-17-one + NADP(+). Functionally, controls the reversible conversion of biologically active glucocorticoids such as 11-dehydrocorticosterone to corticosterone using NADP(H). Participates in the corticosteroid receptor-mediated anti-inflammatory response, as well as metabolic and homeostatic processes. Bidirectional in vitro, predominantly functions as a reductase in vivo, thereby increasing the concentration of active glucocorticoids. It has broad substrate specificity, besides glucocorticoids, it accepts other steroid and sterol substrates. Interconverts 7-oxo- and 7-hydroxy-neurosteroids such as 7-oxopregnenolone and 7beta-hydroxypregnenolone, 7-oxodehydroepiandrosterone (3beta-hydroxy-5-androstene-7,17-dione) and 7beta-hydroxydehydroepiandrosterone (3beta,7beta-dihydroxyandrost-5-en-17-one), among others. Catalyzes the stereo-specific conversion of the major dietary oxysterol, 7-ketocholesterol (7-oxocholesterol), into the more polar 7-beta-hydroxycholesterol metabolite. 7-oxocholesterol is one of the most important oxysterols, it participates in several events such as induction of apoptosis, accumulation in atherosclerotic lesions, lipid peroxidation, and induction of foam cell formation. Mediates the 7-oxo reduction of 7-oxolithocholate mainly to chenodeoxycholate, and to a lesser extent to ursodeoxycholate, both in its free form and when conjugated to glycine or taurine, providing a link between glucocorticoid activation and bile acid metabolism. Catalyzes the synthesis of 7-beta-25-dihydroxycholesterol from 7-oxo-25-hydroxycholesterol in vitro, which acts as a ligand for the G-protein-coupled receptor (GPCR) Epstein-Barr virus-induced gene 2 (EBI2) and may thereby regulate immune cell migration. This chain is 11-beta-hydroxysteroid dehydrogenase 1, found in Rattus norvegicus (Rat).